The primary structure comprises 350 residues: Holliday junction branch migration complex subunit RuvB (350 aa).

The interval 4–184 (TDRLIAAQPQ…FGIVQRLEFY (181 aa)) is large ATPase domain (RuvB-L). ATP contacts are provided by residues I23, R24, G65, K68, T69, T70, 131 to 133 (EDY), R174, Y184, and R221. T69 contributes to the Mg(2+) binding site. Residues 185-255 (AVEELTEIVV…IADQALNMLH (71 aa)) are small ATPAse domain (RuvB-S). Residues 258–350 (RHGLDHMDRR…PLTPPGESDA (93 aa)) are head domain (RuvB-H). Positions 294, 313, and 318 each coordinate DNA.

It belongs to the RuvB family. In terms of assembly, homohexamer. Forms an RuvA(8)-RuvB(12)-Holliday junction (HJ) complex. HJ DNA is sandwiched between 2 RuvA tetramers; dsDNA enters through RuvA and exits via RuvB. An RuvB hexamer assembles on each DNA strand where it exits the tetramer. Each RuvB hexamer is contacted by two RuvA subunits (via domain III) on 2 adjacent RuvB subunits; this complex drives branch migration. In the full resolvosome a probable DNA-RuvA(4)-RuvB(12)-RuvC(2) complex forms which resolves the HJ.

Its subcellular location is the cytoplasm. It catalyses the reaction ATP + H2O = ADP + phosphate + H(+). The RuvA-RuvB-RuvC complex processes Holliday junction (HJ) DNA during genetic recombination and DNA repair, while the RuvA-RuvB complex plays an important role in the rescue of blocked DNA replication forks via replication fork reversal (RFR). RuvA specifically binds to HJ cruciform DNA, conferring on it an open structure. The RuvB hexamer acts as an ATP-dependent pump, pulling dsDNA into and through the RuvAB complex. RuvB forms 2 homohexamers on either side of HJ DNA bound by 1 or 2 RuvA tetramers; 4 subunits per hexamer contact DNA at a time. Coordinated motions by a converter formed by DNA-disengaged RuvB subunits stimulates ATP hydrolysis and nucleotide exchange. Immobilization of the converter enables RuvB to convert the ATP-contained energy into a lever motion, pulling 2 nucleotides of DNA out of the RuvA tetramer per ATP hydrolyzed, thus driving DNA branch migration. The RuvB motors rotate together with the DNA substrate, which together with the progressing nucleotide cycle form the mechanistic basis for DNA recombination by continuous HJ branch migration. Branch migration allows RuvC to scan DNA until it finds its consensus sequence, where it cleaves and resolves cruciform DNA. In Chromohalobacter salexigens (strain ATCC BAA-138 / DSM 3043 / CIP 106854 / NCIMB 13768 / 1H11), this protein is Holliday junction branch migration complex subunit RuvB.